Here is a 448-residue protein sequence, read N- to C-terminus: Probable protein phosphatase 2C 74 (448 aa).

The tract at residues 1–48 (MGSCLSSSGGGGSRRSLHGSPHVPGPGRRKRPPKRRPGSCSSSFDNTE) is disordered. Residue G2 is the site of N-myristoyl glycine attachment. Residues 27-37 (GRRKRPPKRRP) are compositionally biased toward basic residues. The PPM-type phosphatase domain maps to 67-384 (TVSLFSQQGK…DDCAVVCLFL (318 aa)). Mn(2+) contacts are provided by D103, G104, D329, and D375. The disordered stretch occupies residues 401 to 431 (HINNGVTEPEPDTASSSTPDSGTGSPELNGV). Positions 412 to 426 (DTASSSTPDSGTGSP) are enriched in low complexity.

This sequence belongs to the PP2C family. In terms of assembly, interacts with KIN10. Mg(2+) is required as a cofactor. Requires Mn(2+) as cofactor. As to expression, expressed in the whole plant.

It localises to the cell membrane. The catalysed reaction is O-phospho-L-seryl-[protein] + H2O = L-seryl-[protein] + phosphate. It carries out the reaction O-phospho-L-threonyl-[protein] + H2O = L-threonyl-[protein] + phosphate. Its function is as follows. Acts as a protein phosphatase. The protein is Probable protein phosphatase 2C 74 of Arabidopsis thaliana (Mouse-ear cress).